The following is an 83-amino-acid chain: Aspergillic acid biosynthesis cluster protein F (83 aa).

Its pathway is secondary metabolite biosynthesis. In terms of biological role, part of the gene cluster that mediates the biosynthesis of aspergillic acid, a hydroxamic acid-containing pyrazinone with aliphatic side chains that originates from leucine (Leu) and isoleucine (Ile). Aspergillic acid has antibiotic properties and was shown to be lethal to mice. The first step in the pathway is the production of deoxyaspergillic acid via a condensation between the Ile amine and the Leu carboxylic acid, followed by a reductive release from the protein forming the dipeptide aldehyde NH(2)-Leu-Ile-CHO, which could undergo an intermolecular cyclization resulting in a dihydropyrazinone. As the NRPS asaC lacks a condensation domain, it is improbable that it is responsible for condensation of Leu and Ile. One possibility is that asaC acts on a previously condensed dipeptide and functions as a Leu-Ile reductase to yield deoxyaspergillic acid. After asaC forms deoxyaspergillic acid, the cytochrome P450 asaD oxidizes the pyrazinone to the hydroxamic acid-containing bioactive metabolite aspergillic acid. The hydroxylase/desaturase asaB can then convert aspergillic acid to hydroxyaspergillic acid. Both aspergillic acid and hydroxyaspergillic acid can form complexes with iron producing ferriaspergillin analogs. The chain is Aspergillic acid biosynthesis cluster protein F from Aspergillus flavus (strain ATCC 200026 / FGSC A1120 / IAM 13836 / NRRL 3357 / JCM 12722 / SRRC 167).